Consider the following 393-residue polypeptide: Short-chain dehydrogenase/reductase family 42E member 1 (393 aa).

Tyrosine 152 acts as the Proton acceptor in catalysis. Lysine 156 provides a ligand contact to NAD(+). A run of 2 helical transmembrane segments spans residues 282–302 and 371–391; these read LPLTLVYCFAFLTEMVHFILG and GLLVFLLIIAVLIWLPSSVIL.

Belongs to the 3-beta-HSD family.

Its subcellular location is the membrane. The chain is Short-chain dehydrogenase/reductase family 42E member 1 (SDR42E1) from Macaca fascicularis (Crab-eating macaque).